Consider the following 534-residue polypeptide: Cargo protein 2 (534 aa).

As to quaternary structure, homododecamer. Localizes inside the capsid.

It localises to the virion. Functionally, protein that is stored in high quantity in the viral capsid and may play a role during ejection. This Bacteroides intestinalis (Bacteroides phage PhiCrAss001) protein is Cargo protein 2.